Consider the following 351-residue polypeptide: MSLQWWRDTCREADPQMRRRAAERQDRLTKPRGSLGRLEQVAIDLAALQGRERPSLERLWVTVFAGDHGVVAEGVSAYPQAVTGEMLRNFVRGGAAISVLARELGAGLEVVDLGTAVPLEALPGVRHLRLAAGTANFVEAPAMGAEQCLLALEAGRESVRRAEQAGSQLFIGGEMGIGNTTAAAAMACALLDAPVSALVGPGTGLDASGVAHKTAVIERALALHGAHRADPFETLRRLGGLEIAALAGAYLACAQKGMVALVDGYICSVAALCAVRLNPACRDWLLFAHSGAEPGHRHVLEALAAQPLLDLGLRLGEGSGAALAVPLLRQACALHAGMATFAEAAVSDRPA.

Residue Glu317 is the Proton acceptor of the active site.

The protein belongs to the CobT family.

It catalyses the reaction 5,6-dimethylbenzimidazole + nicotinate beta-D-ribonucleotide = alpha-ribazole 5'-phosphate + nicotinate + H(+). It participates in nucleoside biosynthesis; alpha-ribazole biosynthesis; alpha-ribazole from 5,6-dimethylbenzimidazole: step 1/2. In terms of biological role, catalyzes the synthesis of alpha-ribazole-5'-phosphate from nicotinate mononucleotide (NAMN) and 5,6-dimethylbenzimidazole (DMB). This is Nicotinate-nucleotide--dimethylbenzimidazole phosphoribosyltransferase from Pseudomonas aeruginosa (strain UCBPP-PA14).